We begin with the raw amino-acid sequence, 307 residues long: Beta-lactamase (307 aa).

A signal peptide (tat-type signal) is located at residues 1–34 (MRNRGFGRRELLVAMAMLVSVTGCARHASGARPA). Catalysis depends on S84, which acts as the Acyl-ester intermediate. S142 contacts substrate. Catalysis depends on E182, which acts as the Proton acceptor. 251–253 (TGT) is a binding site for substrate.

It belongs to the class-A beta-lactamase family. In terms of assembly, monomer. Post-translationally, exported by the Tat system. The position of the signal peptide cleavage has not been experimentally proven.

The protein localises to the periplasm. The protein resides in the secreted. It catalyses the reaction a beta-lactam + H2O = a substituted beta-amino acid. With respect to regulation, is inhibited by clavulanate. Functionally, extended spectrum beta-lactamase (ESBL) that inactivates beta-lactam antibiotics by hydrolyzing the amide group of the beta-lactam ring. Displays high levels of penicillinase and cephalosporinase activity as well as measurable activity with carbapenems, including imipenem and meropenem. Plays a primary role in the intrinsic resistance of mycobacteria to beta-lactam antibiotics. This is Beta-lactamase (blaC) from Mycobacterium bovis (strain ATCC BAA-935 / AF2122/97).